The chain runs to 242 residues: Transcription factor TCP17 (242 aa).

The region spanning 33–91 (GKDRHSKVCTVRGLRDRRIRLSVMTAIQVYDLQERLGLSQPSKVIDWLLEVAKNDVDLL) is the TCP domain.

Interacts with SPL. Expressed in cotyledons, particularly in the vascular region, in leaves, roots, stems, buds, flowers and siliques.

The protein resides in the nucleus. In terms of biological role, plays a pivotal role in the control of morphogenesis of shoot organs by negatively regulating the expression of boundary-specific genes such as CUC genes, probably through the induction of miRNA (e.g. miR164). Participates in ovule development. This Arabidopsis thaliana (Mouse-ear cress) protein is Transcription factor TCP17 (TCP17).